The sequence spans 1088 residues: Neural cell adhesion molecule 1-A (1088 aa).

Residues 1-19 form the signal peptide; the sequence is MLHIKDLIWTLYFIGTAVA. Ig-like C2-type domains are found at residues 20 to 108, 113 to 202, 209 to 294, 303 to 397, and 400 to 484; these read LEVN…GTVN, QKLT…KDIQ, PTIQ…AEAT, PKIT…FEVQ, and PKIR…HEFS. Residues 20 to 705 lie on the Extracellular side of the membrane; that stretch reads LEVNIVPDQG…TASAGTGLGT (686 aa). 2 disulfide bridges follow: Cys-41–Cys-93 and Cys-136–Cys-186. N-linked (GlcNAc...) asparagine glycosylation is present at Asn-82. Heparin-binding positions include 149-153 and 158-162; these read RHKGK and KKDVR. Asn-219 carries N-linked (GlcNAc...) asparagine glycosylation. Cys-232 and Cys-282 are oxidised to a cystine. Asn-310, Asn-341, Asn-417, Asn-443, and Asn-472 each carry an N-linked (GlcNAc...) asparagine glycan. Residues Cys-323 and Cys-379 are joined by a disulfide bond. A disulfide bond links Cys-420 and Cys-473. Fibronectin type-III domains follow at residues 493–592 and 594–690; these read TPSS…TQPV and EPSA…TAKP. The chain crosses the membrane as a helical span at residues 706–723; it reads GAIVGILIVIFVLLLVVV. Residues 724–1088 lie on the Cytoplasmic side of the membrane; sequence DVTCFFLNKC…TQTNANESKA (365 aa). Residues 758–784 are compositionally biased toward basic and acidic residues; that stretch reads EGKAAFSKDESKEPIVEVRTEEERTPN. Disordered regions lie at residues 758 to 802, 829 to 1000, and 1024 to 1088; these read EGKA…LTEP, FATA…DGGT, and VASG…ESKA. 3 stretches are compositionally biased toward low complexity: residues 835-847, 854-875, and 913-936; these read SPTS…TSST, APDS…APTT, and PSAA…VPPN. Residues 965 to 974 are compositionally biased toward polar residues; it reads QPSTVKNPTE. Residues 1046-1064 are compositionally biased toward basic and acidic residues; the sequence is AKTEKTQVEEKSKPEEIDV. Over residues 1076–1088 the composition is skewed to polar residues; that stretch reads NEATQTNANESKA.

Post-translationally, polysialylated by ST8SIA2 and ST8SIA4. Polysialylation modulates cell interactions by confering both attractive and repulsive properties that are highly regulated by ST8SIA2 and ST8SIA4. Polysialylation is formed on a-2,3-linked sialic acid of core glycans. Expressed in neuron and in presumptive neural tissue.

The protein resides in the cell membrane. Its function is as follows. This protein is a cell adhesion molecule involved in neuron-neuron adhesion, neurite fasciculation, outgrowth of neurites, etc. The sequence is that of Neural cell adhesion molecule 1-A from Xenopus laevis (African clawed frog).